Consider the following 622-residue polypeptide: Iron transport multicopper oxidase fio1 (622 aa).

The signal sequence occupies residues 1–22 (MNKFFSFPILGLLLTCVRFVVA). The Extracellular segment spans residues 23 to 553 (KERLFEWNVT…GEMPAGWTSK (531 aa)). N-linked (GlcNAc...) asparagine glycans are attached at residues Asn-30 and Asn-79. Plastocyanin-like domains are found at residues 49 to 147 (IGVN…FIIN) and 194 to 304 (TGLF…LSYN). Residues His-85 and His-87 each contribute to the Cu cation site. 2 N-linked (GlcNAc...) asparagine glycosylation sites follow: Asn-117 and Asn-123. His-129 and His-131 together coordinate Cu cation. 8 N-linked (GlcNAc...) asparagine glycosylation sites follow: Asn-198, Asn-202, Asn-234, Asn-269, Asn-296, Asn-338, Asn-360, and Asn-376. Positions 386–498 (EPVTYGPYTN…SGLLATFIEA (113 aa)) constitute a Plastocyanin-like 3 domain. His-417, His-420, His-422, His-480, Cys-481, His-482, and His-486 together coordinate Cu cation. Residue Asn-532 is glycosylated (N-linked (GlcNAc...) asparagine). A helical membrane pass occupies residues 554–574 (AIGTMAACVISACIGMGSIIF). At 575–622 (YGASIHPVPTEELDENDDLQEAALENAAMFLDTDKAVEKVVEGKDEIK) the chain is on the cytoplasmic side.

Belongs to the multicopper oxidase family. The cofactor is Cu cation.

It localises to the cell membrane. Its function is as follows. Could be an iron transport multicopper oxidase, which is required for Fe(2+) high affinity uptake. May be required to oxidize Fe(2+) and release it from the transporter. Essential component of copper-dependent iron transport. This is Iron transport multicopper oxidase fio1 (fio1) from Schizosaccharomyces pombe (strain 972 / ATCC 24843) (Fission yeast).